Reading from the N-terminus, the 916-residue chain is Protein translocase subunit SecA (916 aa).

Residues Gln-87, 105–109 (GEGKT), and Asp-507 each bind ATP. The Zn(2+) site is built by Cys-900, Cys-902, Cys-911, and His-912.

This sequence belongs to the SecA family. In terms of assembly, monomer and homodimer. Part of the essential Sec protein translocation apparatus which comprises SecA, SecYEG and auxiliary proteins SecDF-YajC and YidC. Requires Zn(2+) as cofactor.

It is found in the cell inner membrane. The protein resides in the cytoplasm. It catalyses the reaction ATP + H2O + cellular proteinSide 1 = ADP + phosphate + cellular proteinSide 2.. Functionally, part of the Sec protein translocase complex. Interacts with the SecYEG preprotein conducting channel. Has a central role in coupling the hydrolysis of ATP to the transfer of proteins into and across the cell membrane, serving both as a receptor for the preprotein-SecB complex and as an ATP-driven molecular motor driving the stepwise translocation of polypeptide chains across the membrane. This is Protein translocase subunit SecA from Neisseria gonorrhoeae (strain NCCP11945).